The chain runs to 1014 residues: SUMO-specific isopeptidase USPL1 (1014 aa).

Disordered stretches follow at residues 137 to 158 and 275 to 318; these read TFTD…EEQP and EEKP…VSDE. The span at 275-289 shows a compositional bias: basic and acidic residues; sequence EEKPVSLVHTEDQHL. Positions 355 to 636 constitute a USP domain; the sequence is LFWKNEENMC…EFHILFWETD (282 aa). Residue Cys-364 is the Nucleophile of the active site. The SUMO-binding stretch occupies residues 364-631; it reads CWLDAMLVML…PFPSSEFHIL (268 aa). Catalysis depends on His-592, which acts as the Proton acceptor. 2 disordered regions span residues 794–823 and 844–867; these read HPSF…YDKH and NSQP…AGQE. A compositionally biased stretch (pro residues) spans 802-815; that stretch reads IRPPPPLPPAPKPK.

The protein belongs to the peptidase C19 family.

The protein localises to the nucleus. It localises to the cajal body. In terms of biological role, SUMO-specific isopeptidase involved in protein desumoylation. Specifically binds SUMO proteins with a higher affinity for sumo2 and sumo3 which it cleaves more efficiently. Also able to process full-length SUMO proteins to their mature forms. Plays a key role in RNA polymerase-II-mediated snRNA transcription in the Cajal bodies. Is a component of complexes that can bind to U snRNA genes. The protein is SUMO-specific isopeptidase USPL1 (uspl1) of Danio rerio (Zebrafish).